A 398-amino-acid chain; its full sequence is ATP-dependent RNA helicase eIF4A (398 aa).

Residues aspartate 25–glutamine 53 carry the Q motif motif. Positions isoleucine 56–isoleucine 226 constitute a Helicase ATP-binding domain. ATP is bound at residue alanine 69–threonine 76. The DEAD box signature appears at aspartate 174–aspartate 177. Residues glycine 237–isoleucine 398 enclose the Helicase C-terminal domain.

It belongs to the DEAD box helicase family. eIF4A subfamily. Component of the eIF4F complex, which composition varies with external and internal environmental conditions. It is composed of at least eIF4A, eIF4E and eIF4G.

Its subcellular location is the cytoplasm. The catalysed reaction is ATP + H2O = ADP + phosphate + H(+). Functionally, ATP-dependent RNA helicase which is a subunit of the eIF4F complex involved in cap recognition and is required for mRNA binding to ribosome. In the current model of translation initiation, eIF4A unwinds RNA secondary structures in the 5'-UTR of mRNAs which is necessary to allow efficient binding of the small ribosomal subunit, and subsequent scanning for the initiator codon. This is ATP-dependent RNA helicase eIF4A (tif1) from Botryotinia fuckeliana (strain B05.10) (Noble rot fungus).